The following is a 67-amino-acid chain: ATP synthase F(0) complex subunit 8 (67 aa).

Residues 8–24 traverse the membrane as a helical segment; sequence TWFTTIVAMILSLFILM. Position 54 is an N6-acetyllysine; alternate (Lys54). N6-succinyllysine; alternate is present on Lys54. Lys57 carries the N6-acetyllysine modification.

This sequence belongs to the ATPase protein 8 family. Component of the ATP synthase complex composed at least of ATP5F1A/subunit alpha, ATP5F1B/subunit beta, ATP5MC1/subunit c (homooctomer), MT-ATP6/subunit a, MT-ATP8/subunit 8, ATP5ME/subunit e, ATP5MF/subunit f, ATP5MG/subunit g, ATP5MK/subunit k, ATP5MJ/subunit j, ATP5F1C/subunit gamma, ATP5F1D/subunit delta, ATP5F1E/subunit epsilon, ATP5PF/subunit F6, ATP5PB/subunit b, ATP5PD/subunit d, ATP5PO/subunit OSCP. ATP synthase complex consists of a soluble F(1) head domain (subunits alpha(3) and beta(3)) - the catalytic core - and a membrane F(0) domain - the membrane proton channel (subunits c, a, 8, e, f, g, k and j). These two domains are linked by a central stalk (subunits gamma, delta, and epsilon) rotating inside the F1 region and a stationary peripheral stalk (subunits F6, b, d, and OSCP). Interacts with PRICKLE3.

The protein resides in the mitochondrion membrane. Subunit 8, of the mitochondrial membrane ATP synthase complex (F(1)F(0) ATP synthase or Complex V) that produces ATP from ADP in the presence of a proton gradient across the membrane which is generated by electron transport complexes of the respiratory chain. ATP synthase complex consist of a soluble F(1) head domain - the catalytic core - and a membrane F(1) domain - the membrane proton channel. These two domains are linked by a central stalk rotating inside the F(1) region and a stationary peripheral stalk. During catalysis, ATP synthesis in the catalytic domain of F(1) is coupled via a rotary mechanism of the central stalk subunits to proton translocation. In vivo, can only synthesize ATP although its ATP hydrolase activity can be activated artificially in vitro. Part of the complex F(0) domain. This is ATP synthase F(0) complex subunit 8 from Oryctolagus cuniculus (Rabbit).